We begin with the raw amino-acid sequence, 527 residues long: Peptide chain release factor 3 (527 aa).

The tr-type G domain maps to 10-278 (DKRRTFAIIS…AFIEYAPAPL (269 aa)). Residues 19–26 (SHPDAGKT), 87–91 (DTPGH), and 141–144 (NKLD) contribute to the GTP site.

Belongs to the TRAFAC class translation factor GTPase superfamily. Classic translation factor GTPase family. PrfC subfamily.

It is found in the cytoplasm. In terms of biological role, increases the formation of ribosomal termination complexes and stimulates activities of RF-1 and RF-2. It binds guanine nucleotides and has strong preference for UGA stop codons. It may interact directly with the ribosome. The stimulation of RF-1 and RF-2 is significantly reduced by GTP and GDP, but not by GMP. In Pelobacter propionicus (strain DSM 2379 / NBRC 103807 / OttBd1), this protein is Peptide chain release factor 3.